The following is a 211-amino-acid chain: Probable chemoreceptor glutamine deamidase CheD (211 aa).

It belongs to the CheD family.

It catalyses the reaction L-glutaminyl-[protein] + H2O = L-glutamyl-[protein] + NH4(+). Functionally, probably deamidates glutamine residues to glutamate on methyl-accepting chemotaxis receptors (MCPs), playing an important role in chemotaxis. The polypeptide is Probable chemoreceptor glutamine deamidase CheD (Hahella chejuensis (strain KCTC 2396)).